Reading from the N-terminus, the 431-residue chain is STE20-related kinase adapter protein alpha (431 aa).

Phosphoserine occurs at positions 2 and 46. 2 disordered regions span residues Glu-32–Ser-52 and Pro-314–Tyr-344. Residues Tyr-69–Phe-379 enclose the Protein kinase domain. Thr-419 carries the phosphothreonine; by LKB1 modification.

This sequence belongs to the protein kinase superfamily. STE Ser/Thr protein kinase family. STE20 subfamily. Component of a trimeric complex composed of STK11/LKB1, STRAD (STRADA or STRADB) and CAB39/MO25 (CAB39/MO25alpha or CAB39L/MO25beta): the complex tethers STK11/LKB1 in the cytoplasm and stimulates its catalytic activity.

Its subcellular location is the nucleus. The protein resides in the cytoplasm. Its function is as follows. Pseudokinase which, in complex with CAB39/MO25 (CAB39/MO25alpha or CAB39L/MO25beta), binds to and activates STK11/LKB1. Adopts a closed conformation typical of active protein kinases and binds STK11/LKB1 as a pseudosubstrate, promoting conformational change of STK11/LKB1 in an active conformation. This is STE20-related kinase adapter protein alpha (Strada) from Mus musculus (Mouse).